The chain runs to 275 residues: Diaminopimelate epimerase (275 aa).

Substrate is bound by residues Asn12, Gln45, and Asn65. Residue Cys74 is the Proton donor of the active site. Substrate contacts are provided by residues Gly75–Asn76, Asn158, Asn191, and Glu209–Arg210. Residue Cys218 is the Proton acceptor of the active site. Gly219–Thr220 serves as a coordination point for substrate.

The protein belongs to the diaminopimelate epimerase family. Homodimer.

Its subcellular location is the cytoplasm. The enzyme catalyses (2S,6S)-2,6-diaminopimelate = meso-2,6-diaminopimelate. The protein operates within amino-acid biosynthesis; L-lysine biosynthesis via DAP pathway; DL-2,6-diaminopimelate from LL-2,6-diaminopimelate: step 1/1. Functionally, catalyzes the stereoinversion of LL-2,6-diaminopimelate (L,L-DAP) to meso-diaminopimelate (meso-DAP), a precursor of L-lysine and an essential component of the bacterial peptidoglycan. This chain is Diaminopimelate epimerase, found in Shewanella frigidimarina (strain NCIMB 400).